An 816-amino-acid polypeptide reads, in one-letter code: Stemod-13(17)-ene synthase (816 aa).

A compositionally biased stretch (polar residues) spans 1 to 10 (MMLLSSSYSG). The disordered stretch occupies residues 1–24 (MMLLSSSYSGGQFPGVSPLGTRPK). Positions 553, 557, 698, 702, and 706 each coordinate Mg(2+). The DDXXD motif signature appears at 553 to 557 (DDFFD).

It belongs to the terpene synthase family. Mg(2+) serves as cofactor.

It catalyses the reaction 9alpha-copalyl diphosphate = stemod-13(17)-ene + diphosphate. Its function is as follows. Catalyzes the conversion of syn-copalyl diphosphate to stemodene. The protein is Stemod-13(17)-ene synthase (KSL11) of Oryza sativa subsp. indica (Rice).